The primary structure comprises 197 residues: A-kinase anchor protein 14 (197 aa).

Polar residues-rich tracts occupy residues 1-11 (MSETQNSTSQK) and 19-29 (AASQTMPNTQD). Residues 1-29 (MSETQNSTSQKAMDEDNKAASQTMPNTQD) are disordered. Positions 35-52 (ELTQVALALVEDVINYAV) are RII-binding.

As to quaternary structure, binds to type II regulatory subunits (RII). Present in cilia (at protein level). Expressed in tissues containing axoneme-based organelles (cilia and/or flagella): trachea and testis. Highly expressed in airway cilia.

It localises to the cytoplasm. Its function is as follows. Binds to type II regulatory subunits of protein kinase A and anchors/targets them. This Homo sapiens (Human) protein is A-kinase anchor protein 14 (AKAP14).